The chain runs to 1142 residues: Error-prone DNA polymerase (1142 aa).

Positions 291–361 (TSSPAQAARE…GTGAAAGTDR (71 aa)) are disordered. 2 stretches are compositionally biased toward low complexity: residues 311–320 (LRASLPAERP) and 327–344 (GPAA…PGEP). The segment covering 345–355 (GLAGAGGGTGA) has biased composition (gly residues).

The protein belongs to the DNA polymerase type-C family. DnaE2 subfamily.

Its subcellular location is the cytoplasm. The enzyme catalyses DNA(n) + a 2'-deoxyribonucleoside 5'-triphosphate = DNA(n+1) + diphosphate. DNA polymerase involved in damage-induced mutagenesis and translesion synthesis (TLS). It is not the major replicative DNA polymerase. In Anaeromyxobacter dehalogenans (strain 2CP-1 / ATCC BAA-258), this protein is Error-prone DNA polymerase.